The sequence spans 129 residues: MSGRGKQGGKVRAKAKSRSSRAGLQFPVGRVHRLLRKGNYAERVGAGAPVYLAAVLEYLTAEILELAGNAARDNKKTRIIPRHLQLAIRNDEELNKLLGKVTIAQGGVLPNIQAVLLPKKTESQKTKSK.

The disordered stretch occupies residues 1–22 (MSGRGKQGGKVRAKAKSRSSRA). N6-acetyllysine occurs at positions 6 and 10. The span at 7-19 (QGGKVRAKAKSRS) shows a compositional bias: basic residues. Position 10 is an N6-lactoyllysine; alternate (Lys10). Residue Gln105 is modified to N5-methylglutamine. Thr121 is modified (phosphothreonine; by DCAF1).

It belongs to the histone H2A family. The nucleosome is a histone octamer containing two molecules each of H2A, H2B, H3 and H4 assembled in one H3-H4 heterotetramer and two H2A-H2B heterodimers. The octamer wraps approximately 147 bp of DNA. Post-translationally, glutamine methylation at Gln-105 (H2AQ104me) by FBL is specifically dedicated to polymerase I. It is present at 35S ribosomal DNA locus and impairs binding of the FACT complex. Monoubiquitination of Lys-120 (H2AXK119ub) gives a specific tag for epigenetic transcriptional repression. Following DNA double-strand breaks (DSBs), it is ubiquitinated through 'Lys-63' linkage of ubiquitin moieties. In terms of processing, phosphorylation on Ser-2 (H2AS1ph) is enhanced during mitosis. Phosphorylation on Ser-2 by RPS6KA5/MSK1 directly represses transcription. Acetylation of H3 inhibits Ser-2 phosphorylation by RPS6KA5/MSK1. Phosphorylation at Thr-121 (H2AT120ph) by DCAF1 is present in the regulatory region of many tumor suppresor genes and down-regulates their transcription.

The protein resides in the nucleus. It is found in the chromosome. Functionally, core component of nucleosome. Nucleosomes wrap and compact DNA into chromatin, limiting DNA accessibility to the cellular machineries which require DNA as a template. Histones thereby play a central role in transcription regulation, DNA repair, DNA replication and chromosomal stability. DNA accessibility is regulated via a complex set of post-translational modifications of histones, also called histone code, and nucleosome remodeling. In Bos taurus (Bovine), this protein is Histone H2A.J.